Here is an 89-residue protein sequence, read N- to C-terminus: Large ribosomal subunit protein bL27 (89 aa).

It belongs to the bacterial ribosomal protein bL27 family.

This is Large ribosomal subunit protein bL27 from Bacteroides fragilis (strain ATCC 25285 / DSM 2151 / CCUG 4856 / JCM 11019 / LMG 10263 / NCTC 9343 / Onslow / VPI 2553 / EN-2).